The sequence spans 753 residues: Polyribonucleotide nucleotidyltransferase (753 aa).

Residues aspartate 488 and aspartate 494 each contribute to the Mg(2+) site. Residues 555-614 (PRLLRTKISPDKIGALIGPGGKNIRGIQETTGAVIEVDDEGTVLVASSNKESAQEAMRQV) enclose the KH domain. Residues 624 to 692 (GKIYDGTVSS…EHDRVKLSRR (69 aa)) form the S1 motif domain. A compositionally biased stretch (acidic residues) spans 698 to 719 (LGEEDPLAVEGEGGGDSEGGGD). The segment at 698 to 753 (LGEEDPLAVEGEGGGDSEGGGDGEDRPRRRRGGSGGGGGGGRGRGPRRSGGGRDRD) is disordered. Positions 730–740 (GSGGGGGGGRG) are enriched in gly residues.

Belongs to the polyribonucleotide nucleotidyltransferase family. The cofactor is Mg(2+).

Its subcellular location is the cytoplasm. It carries out the reaction RNA(n+1) + phosphate = RNA(n) + a ribonucleoside 5'-diphosphate. In terms of biological role, involved in mRNA degradation. Catalyzes the phosphorolysis of single-stranded polyribonucleotides processively in the 3'- to 5'-direction. The protein is Polyribonucleotide nucleotidyltransferase of Rhodopirellula baltica (strain DSM 10527 / NCIMB 13988 / SH1).